Consider the following 316-residue polypeptide: Neuroguidin (316 aa).

Disordered stretches follow at residues 143–172 (SEAD…VKKY) and 280–316 (SALT…RKRH). Residues 145–157 (ADEGESDSGEDCA) show a composition bias toward acidic residues. A compositionally biased stretch (basic residues) spans 297–316 (KKSRKGPKKSKKRKGFRKRH).

The protein belongs to the SAS10 family. In terms of assembly, part of the small subunit (SSU) processome, composed of more than 70 proteins and the RNA chaperone small nucleolar RNA (snoRNA) U3.

It localises to the nucleus. Its subcellular location is the nucleolus. It is found in the chromosome. The protein localises to the centromere. The protein resides in the cytoplasm. It localises to the cell projection. Its subcellular location is the axon. It is found in the dendrite. The protein localises to the filopodium. Part of the small subunit (SSU) processome, first precursor of the small eukaryotic ribosomal subunit. During the assembly of the SSU processome in the nucleolus, many ribosome biogenesis factors, an RNA chaperone and ribosomal proteins associate with the nascent pre-rRNA and work in concert to generate RNA folding, modifications, rearrangements and cleavage as well as targeted degradation of pre-ribosomal RNA by the RNA exosome. Its dissociation from the complex determines the transition from state pre-A1 to state pre-A1*. May inhibit mRNA translation. This is Neuroguidin (ngdn) from Xenopus tropicalis (Western clawed frog).